Consider the following 457-residue polypeptide: Peptidyl-prolyl cis-trans isomerase FKBP5 (457 aa).

Residue M1 is modified to N-acetylmethionine. Positions 1–11 are enriched in basic and acidic residues; the sequence is MTTDEGAKNNE. A disordered region spans residues 1 to 24; it reads MTTDEGAKNNEESPTATVAEQGED. S13 carries the phosphoserine modification. Position 28 is an N6-acetyllysine (K28). The PPIase FKBP-type 1 domain maps to 42 to 130; sequence NGEETPMIGD…KIPSNATLFF (89 aa). The residue at position 155 (K155) is an N6-acetyllysine. The PPIase FKBP-type 2 domain occupies 157-243; sequence EGYSNPNEGA…GIEPNAELIY (87 aa). TPR repeat units follow at residues 268–301, 317–350, and 351–384; these read AAIVKEKGTVYFKGGKYMQAVIQYGKIVSWLEME, LAAFLNLAMCYLKLREYTKAVECCDKALGLDSAN, and EKGLYRRGEAQLLMNEFESAKGDFEKVLEVNPQN. The interval 420 to 457 is disordered; that stretch reads DAKEEANKAMGKKTSEGVTNEKGTDSQAMEEEKPEGHV. S445 bears the Phosphoserine mark.

In terms of assembly, part of a heteromultimeric cytoplasmic complex with HSP90AA1, HSPA1A/HSPA1B and steroid receptors. Upon ligand binding dissociates from the complex and FKBP4 takes its place. Interacts with functionally mature heterooligomeric progesterone receptor complexes along with HSP90 and TEBP. Interacts with NR3C1. Interacts with Akt/AKT1 and PHLPP1; enhancing dephosphorylation and subsequent activation of Akt/AKT1. Interacts with IFI44L; this interaction modulates the kinase activity of IKBKB and IKBKE. Interacts with IKBKB and IKBKE. In terms of processing, acetylation impairs ability to promote interaction between Akt/AKT1 and PHLPP1. Deacetylation by SIRT7 promotes interaction between Akt/AKT1 and PHLPP1, leading to suppress Akt/AKT1 activation. Post-translationally, ubiquitinated, leading to degradation in a proteasome-dependent manner. Deubiquitinated by USP49, leading to stabilization. As to expression, widely expressed, enriched in testis compared to other tissues.

The protein localises to the cytoplasm. It is found in the nucleus. The enzyme catalyses [protein]-peptidylproline (omega=180) = [protein]-peptidylproline (omega=0). Inhibited by both FK506 and rapamycin. Immunophilin protein with PPIase and co-chaperone activities. Component of unligated steroid receptors heterocomplexes through interaction with heat-shock protein 90 (HSP90). Plays a role in the intracellular trafficking of heterooligomeric forms of steroid hormone receptors maintaining the complex into the cytoplasm when unliganded. Acts as a regulator of Akt/AKT1 activity by promoting the interaction between Akt/AKT1 and PHLPP1, thereby enhancing dephosphorylation and subsequent activation of Akt/AKT1. Interacts with IKBKE and IKBKB which facilitates IKK complex assembly leading to increased IKBKE and IKBKB kinase activity, NF-kappa-B activation, and IFN production. This Homo sapiens (Human) protein is Peptidyl-prolyl cis-trans isomerase FKBP5 (FKBP5).